Here is a 499-residue protein sequence, read N- to C-terminus: GTPase Der (499 aa).

2 consecutive EngA-type G domains span residues 3-166 (PVVA…LETL) and 213-386 (IKFA…QSAT). Residues 9-16 (GRPNVGKS), 56-60 (DTGGI), 118-121 (NKTD), 219-226 (GRPNVGKS), 266-270 (DTAGV), and 331-334 (NKWD) each bind GTP. A KH-like domain is found at 387-471 (RRTSTAMLTR…PVRVEFQESA (85 aa)).

This sequence belongs to the TRAFAC class TrmE-Era-EngA-EngB-Septin-like GTPase superfamily. EngA (Der) GTPase family. In terms of assembly, associates with the 50S ribosomal subunit.

GTPase that plays an essential role in the late steps of ribosome biogenesis. The protein is GTPase Der of Aeromonas hydrophila subsp. hydrophila (strain ATCC 7966 / DSM 30187 / BCRC 13018 / CCUG 14551 / JCM 1027 / KCTC 2358 / NCIMB 9240 / NCTC 8049).